The sequence spans 192 residues: Large ribosomal subunit protein uL5 (192 aa).

This sequence belongs to the universal ribosomal protein uL5 family. Part of the 50S ribosomal subunit; part of the 5S rRNA/L5/L18/L25 subcomplex. Contacts the 5S rRNA and the P site tRNA. Forms a bridge to the 30S subunit in the 70S ribosome.

Its function is as follows. This is one of the proteins that bind and probably mediate the attachment of the 5S RNA into the large ribosomal subunit, where it forms part of the central protuberance. In the 70S ribosome it contacts protein S13 of the 30S subunit (bridge B1b), connecting the 2 subunits; this bridge is implicated in subunit movement. Contacts the P site tRNA; the 5S rRNA and some of its associated proteins might help stabilize positioning of ribosome-bound tRNAs. This is Large ribosomal subunit protein uL5 from Paenarthrobacter aurescens (strain TC1).